The sequence spans 266 residues: Ribosomal RNA small subunit methyltransferase A (266 aa).

Residues Asn12, Leu14, Gly39, Glu61, Asp87, and Asn107 each coordinate S-adenosyl-L-methionine.

The protein belongs to the class I-like SAM-binding methyltransferase superfamily. rRNA adenine N(6)-methyltransferase family. RsmA subfamily.

The protein resides in the cytoplasm. It catalyses the reaction adenosine(1518)/adenosine(1519) in 16S rRNA + 4 S-adenosyl-L-methionine = N(6)-dimethyladenosine(1518)/N(6)-dimethyladenosine(1519) in 16S rRNA + 4 S-adenosyl-L-homocysteine + 4 H(+). Functionally, specifically dimethylates two adjacent adenosines (A1518 and A1519) in the loop of a conserved hairpin near the 3'-end of 16S rRNA in the 30S particle. May play a critical role in biogenesis of 30S subunits. The polypeptide is Ribosomal RNA small subunit methyltransferase A (Nitratidesulfovibrio vulgaris (strain ATCC 29579 / DSM 644 / CCUG 34227 / NCIMB 8303 / VKM B-1760 / Hildenborough) (Desulfovibrio vulgaris)).